The chain runs to 452 residues: tRNA modification GTPase MnmE (452 aa).

(6S)-5-formyl-5,6,7,8-tetrahydrofolate contacts are provided by Arg-21, Glu-78, and Lys-118. Residues 214–375 form the TrmE-type G domain; that stretch reads GMKAVIAGRP…LREHLKTSMG (162 aa). Position 224 (Asn-224) interacts with K(+). GTP contacts are provided by residues 224-229, 243-249, and 268-271; these read NAGKSS, TNIAGTT, and DTAG. Residue Ser-228 participates in Mg(2+) binding. K(+)-binding residues include Thr-243, Ile-245, and Thr-248. Residue Thr-249 participates in Mg(2+) binding. Residue Lys-452 coordinates (6S)-5-formyl-5,6,7,8-tetrahydrofolate.

The protein belongs to the TRAFAC class TrmE-Era-EngA-EngB-Septin-like GTPase superfamily. TrmE GTPase family. Homodimer. Heterotetramer of two MnmE and two MnmG subunits. The cofactor is K(+).

It is found in the cytoplasm. In terms of biological role, exhibits a very high intrinsic GTPase hydrolysis rate. Involved in the addition of a carboxymethylaminomethyl (cmnm) group at the wobble position (U34) of certain tRNAs, forming tRNA-cmnm(5)s(2)U34. The polypeptide is tRNA modification GTPase MnmE (Haemophilus ducreyi (strain 35000HP / ATCC 700724)).